We begin with the raw amino-acid sequence, 104 residues long: Iron-sulfur cluster assembly protein CyaY (104 aa).

Belongs to the frataxin family.

Its function is as follows. Involved in iron-sulfur (Fe-S) cluster assembly. May act as a regulator of Fe-S biogenesis. The sequence is that of Iron-sulfur cluster assembly protein CyaY from Rickettsia prowazekii (strain Madrid E).